We begin with the raw amino-acid sequence, 78 residues long: Acyl carrier protein (78 aa).

Residues 2 to 77 enclose the Carrier domain; it reads STIEERVKKI…AAIDYIEAAN (76 aa). Ser-37 carries the post-translational modification O-(pantetheine 4'-phosphoryl)serine.

The protein belongs to the acyl carrier protein (ACP) family. 4'-phosphopantetheine is transferred from CoA to a specific serine of apo-ACP by AcpS. This modification is essential for activity because fatty acids are bound in thioester linkage to the sulfhydryl of the prosthetic group.

Its subcellular location is the cytoplasm. The protein operates within lipid metabolism; fatty acid biosynthesis. Its function is as follows. Carrier of the growing fatty acid chain in fatty acid biosynthesis. The polypeptide is Acyl carrier protein (Edwardsiella ictaluri (strain 93-146)).